A 458-amino-acid polypeptide reads, in one-letter code: Type III intermediate filament (458 aa).

The tract at residues 1–100 (MEKGYKMNRS…KVNRTNEKAE (100 aa)) is head. The IF rod domain occupies 97-405 (EKAEMIELND…KLLEGEENRI (309 aa)). The tail stretch occupies residues 406–458 (SMPLPSFGSMSLSDAMFEQQPFENRTSKKKIVIKTVETSGGDVISETTQKIED).

The protein belongs to the intermediate filament family.

The polypeptide is Type III intermediate filament (Tetronarce californica (Pacific electric ray)).